A 464-amino-acid chain; its full sequence is Probable 1,4-beta-D-glucan cellobiohydrolase C (464 aa).

A signal peptide spans 1-19 (MKNFAPSLALSLLLPTVQA). Residues 20–55 (QQTMWGQCGGAGWSGATDCVAGGVCSTQNAYYAQCL) enclose the CBM1 domain. 2 cysteine pairs are disulfide-bonded: C27–C44 and C38–C54. Positions 59–102 (TTATTLSTTSKGTTTTTTSSTTSTGGGSSSTTTKTSTSAGPTVT) are thr-rich linker. Positions 65–100 (STTSKGTTTTTTSSTTSTGGGSSSTTTKTSTSAGPT) are enriched in low complexity. A disordered region spans residues 65–108 (STTSKGTTTTTTSSTTSTGGGSSSTTTKTSTSAGPTVTGSPSGN). A catalytic region spans residues 103 to 464 (GSPSGNPFSG…QLLTNANPAF (362 aa)). D194 is an active-site residue. 2 disulfides stabilise this stretch: C195-C254 and C386-C433. D240 serves as the catalytic Proton donor. D419 acts as the Nucleophile in catalysis.

Belongs to the glycosyl hydrolase 6 (cellulase B) family.

The protein localises to the secreted. It carries out the reaction Hydrolysis of (1-&gt;4)-beta-D-glucosidic linkages in cellulose and cellotetraose, releasing cellobiose from the non-reducing ends of the chains.. In terms of biological role, the biological conversion of cellulose to glucose generally requires three types of hydrolytic enzymes: (1) Endoglucanases which cut internal beta-1,4-glucosidic bonds; (2) Exocellobiohydrolases that cut the disaccharide cellobiose from the non-reducing end of the cellulose polymer chain; (3) Beta-1,4-glucosidases which hydrolyze the cellobiose and other short cello-oligosaccharides to glucose. The polypeptide is Probable 1,4-beta-D-glucan cellobiohydrolase C (cbhC) (Aspergillus clavatus (strain ATCC 1007 / CBS 513.65 / DSM 816 / NCTC 3887 / NRRL 1 / QM 1276 / 107)).